A 472-amino-acid chain; its full sequence is Ammonium transporter Rh type C (472 aa).

The Cytoplasmic segment spans residues 1–9; sequence MAWNTNLRW. A helical transmembrane segment spans residues 10–30; it reads RLPLTCLLLEVVMVILFGVFV. Residues 31–51 lie on the Extracellular side of the membrane; it reads RYDFDADAHWWSWRTEFYYRY. A helical membrane pass occupies residues 52 to 72; sequence PSFQDVHVMVFVGFGFLMTFL. At 73-76 the chain is on the cytoplasmic side; the sequence is QRYG. A helical transmembrane segment spans residues 77 to 97; it reads FSAVGFNFLLAAFGIQWALLM. The Extracellular segment spans residues 98–114; it reads QGWFHFLQGRYIVVGVE. A helical transmembrane segment spans residues 115-135; that stretch reads NLINADFCVASVCVAFGAVLG. Residues 136 to 139 are Cytoplasmic-facing; it reads KVSP. The chain crosses the membrane as a helical span at residues 140 to 160; that stretch reads IQLLIMTFFQVTLFAVNEFIL. Over 161–168 the chain is Extracellular; it reads LNLLKVKD. The helical transmembrane segment at 169–191 threads the bilayer; it reads AGGSMTIHTFGAYFGLTVTRILY. Over 192–209 the chain is Cytoplasmic; the sequence is RRNLEQSKERQNSVYQSD. The helical transmembrane segment at 210–230 threads the bilayer; sequence LFAMIGTLFLWMYWPSFNSAI. Topologically, residues 231 to 241 are extracellular; it reads SYHGDSQHRAA. The chain crosses the membrane as a helical span at residues 242–262; the sequence is INTYCSLAACVLTSVAISSAL. The Cytoplasmic portion of the chain corresponds to 263-294; that stretch reads HKKGKLDMVHIQNATPAGGVAVGTAAEMMLMP. A helical membrane pass occupies residues 295-315; it reads YGALIVGFVCGIISTLGFVYL. Topologically, residues 316 to 336 are extracellular; the sequence is TPFLESRLHIQDTCGINNLHG. A helical transmembrane segment spans residues 337–357; sequence IPGIIGGIVGAVTAASASLEV. Topologically, residues 358–388 are cytoplasmic; sequence YGKEGLVHSFDFQGFKRDWTARTQGKFQIYG. Residues 389-409 form a helical membrane-spanning segment; the sequence is LLVTLAMALMGGIIVGVGLIL. Residues 410 to 450 lie on the Extracellular side of the membrane; it reads RLPFWGQPSDENCFEDAVYWEMPEGNSTVYIPEDPTFKPSG. Asparagine 435 is a glycosylation site (N-linked (GlcNAc...) asparagine). A helical membrane pass occupies residues 451 to 471; the sequence is PSVPSVPMVSPLPMASSVPLV. Position 472 (proline 472) is a topological domain, cytoplasmic.

It belongs to the ammonium transporter (TC 2.A.49) family. Rh subfamily. Homotrimer. N-glycosylated.

Its subcellular location is the cell membrane. It localises to the apical cell membrane. The enzyme catalyses NH4(+)(in) = NH4(+)(out). The catalysed reaction is methylamine(out) = methylamine(in). It catalyses the reaction CO2(out) = CO2(in). In terms of biological role, ammonium transporter involved in the maintenance of acid-base homeostasis. Transports ammonium and its related derivative methylammonium across the plasma membrane of epithelial cells likely contributing to renal transepithelial ammonia transport and ammonia metabolism. Postulated to primarily mediate an electroneutral bidirectional transport of NH3 ammonia species according to a mechanism that implies interaction of an NH4(+) ion with acidic residues of the pore entry followed by dissociation of NH4(+) into NH3 and H(+). As a result NH3 transits through the central pore and is protonated on the extracellular side reforming NH4(+). May act as a CO2 channel providing for renal acid secretion. In Pongo abelii (Sumatran orangutan), this protein is Ammonium transporter Rh type C (RHCG).